The chain runs to 409 residues: Glucose-1-phosphate adenylyltransferase (409 aa).

Alpha-D-glucose 1-phosphate contacts are provided by residues Gly168, 183–184 (EK), and Ser201.

The protein belongs to the bacterial/plant glucose-1-phosphate adenylyltransferase family. In terms of assembly, homotetramer.

It catalyses the reaction alpha-D-glucose 1-phosphate + ATP + H(+) = ADP-alpha-D-glucose + diphosphate. It functions in the pathway glycan biosynthesis; glycogen biosynthesis. Involved in the biosynthesis of ADP-glucose, a building block required for the elongation reactions to produce glycogen. Catalyzes the reaction between ATP and alpha-D-glucose 1-phosphate (G1P) to produce pyrophosphate and ADP-Glc. This chain is Glucose-1-phosphate adenylyltransferase, found in Corynebacterium glutamicum (strain R).